Consider the following 244-residue polypeptide: 3-deoxy-manno-octulosonate cytidylyltransferase (244 aa).

It belongs to the KdsB family.

It localises to the cytoplasm. The enzyme catalyses 3-deoxy-alpha-D-manno-oct-2-ulosonate + CTP = CMP-3-deoxy-beta-D-manno-octulosonate + diphosphate. It functions in the pathway nucleotide-sugar biosynthesis; CMP-3-deoxy-D-manno-octulosonate biosynthesis; CMP-3-deoxy-D-manno-octulosonate from 3-deoxy-D-manno-octulosonate and CTP: step 1/1. The protein operates within bacterial outer membrane biogenesis; lipopolysaccharide biosynthesis. In terms of biological role, activates KDO (a required 8-carbon sugar) for incorporation into bacterial lipopolysaccharide in Gram-negative bacteria. This is 3-deoxy-manno-octulosonate cytidylyltransferase from Flavobacterium johnsoniae (strain ATCC 17061 / DSM 2064 / JCM 8514 / BCRC 14874 / CCUG 350202 / NBRC 14942 / NCIMB 11054 / UW101) (Cytophaga johnsonae).